Reading from the N-terminus, the 940-residue chain is Antiviral innate immune response receptor RIG-I (940 aa).

CARD domains lie at 1–87 and 92–172; these read MTAE…GLCE and WDFQ…KTLK. Glycyl lysine isopeptide (Lys-Gly) (interchain with G-Cter in ubiquitin) cross-links involve residues Lys48, Lys96, Lys154, Lys164, Lys172, and Lys190. An interaction with ZC3HAV1 region spans residues 219–928; sequence ENQNLSQNSC…LSFDAAEMAG (710 aa). Positions 249-428 constitute a Helicase ATP-binding domain; that stretch reads ALPAQNGKNT…AEATEYICKL (180 aa). 262–269 contributes to the ATP binding site; it reads APTGCGKT. Residues 370 to 373 carry the DECH box motif; that stretch reads DECH. The Helicase C-terminal domain maps to 613–779; that stretch reads KLRDLCFILQ…ILQTWDEAVF (167 aa). Positions 738–928 are mediates interaction with RNF135; sequence GSKCFLLTAN…LSFDAAEMAG (191 aa). Thr773 carries the phosphothreonine; by CK2 modification. Residues 795–928 enclose the RLR CTR domain; the sequence is DNQGKPEPVP…LSFDAAEMAG (134 aa). Cys813 contributes to the Zn(2+) binding site. Lys815 participates in a covalent cross-link: Glycyl lysine isopeptide (Lys-Gly) (interchain with G-Cter in ubiquitin). Cys816 provides a ligand contact to Zn(2+). Residue Lys861 is modified to N6-acetyllysine. Residues Cys867 and Cys872 each coordinate Zn(2+). Lys912 carries the post-translational modification N6-acetyllysine.

Belongs to the helicase family. RLR subfamily. Monomer; maintained as a monomer in an autoinhibited state. Upon binding of viral RNAs and conformational shift, homooligomerizes and forms filaments on these molecules. Interacts (via tandem CARD domain) with MAVS/IPS1 promoting its filamentation. Interacts with DHX58/LGP2, IKBKE, TBK1 and STING1. Interacts (via CARD domain) with TRIM25 (via SPRY domain). Interacts (double-stranded RNA-bound oligomeric form) with RNF135 (homodimer); involved in RNA length-dependent activation of the RIG-I signaling pathway. Interacts with CYLD. Interacts with NLRC5; blocks the interaction of MAVS/IPS1 to RIGI. Interacts with SRC. Interacts with DDX60. Interacts with ZC3HAV1 (via zinc-fingers) in an RNA-dependent manner. Interacts (via tandem CARD domain) with SEC14L1; the interaction is direct and impairs the interaction of RIGI with MAVS/IPS1. Interacts with VCP/p97; interaction is direct and allows the recruitment of RNF125 and subsequent ubiquitination and degradation. Interacts with NOP53; may regulate RIGI through USP15-mediated 'Lys-63'-linked deubiquitination. Interacts with SIGLEC10, CBL and PTPN11; within a negative feedback loop leading to RIGI degradation. Interacts with LRRC25. Interacts with ZCCHC3; leading to activation of RIGI. Interacts with RNF123. Interacts with UBE2D3 and UBE2N; E2 ubiquitin ligases involved in RNF135-mediated ubiquitination of RIGI and activation of the RIG-I signaling pathway. Interacts with IFIT3. Interacts with DDX3X. Interacts with RTN3. Interacts with ARL16; this interaction is GTP-dependent and induced upon viral infection; this interaction suppresses the RNA sensing activity of RIGI. Interacts with DHX16; this interaction enhances RIGI-mediated antiviral response. Interacts with IRGM; promoting RIGI degradation. Interacts with IFI6; this interaction inhibits RIGI activation. Interacts with ECSIT; this interaction bridges RIGI to the MAVS complex at the mitochondrion. Interacts with YWHAE; this interaction drives RIGI at the mitochondrion. Post-translationally, phosphorylated in resting cells and dephosphorylated in RNA virus-infected cells. Phosphorylation at Thr-773 results in inhibition of its activity while dephosphorylation at these sites results in its activation. In terms of processing, ISGylated. Conjugated to ubiquitin-like protein ISG15 upon IFN-beta stimulation. ISGylation negatively regulates its function in antiviral signaling response. Sumoylated, probably by MUL1; inhibiting its polyubiquitination. Post-translationally, acetylated in response to RNA virus infection. Deacetylated by HDAC6 in the presence of viral mRNAs which is required for detection of viral RNA by RIGI. In terms of processing, ubiquitinated. 'Lys-63' ubiquitination by RNF135, which occurs after RNA-binding and homodimerization, releases the autoinhibition of the CARD domains by the RLR CTR domain, an essential step in the activation of the RIG-I signaling pathway. Also ubiquitinated by TRIM4. Also undergoes 'Lys-48' ubiquitination by RNF125 that leads to proteasomal degradation. 'Lys-48' ubiquitination follows viral infection and is enhanced by 'Lys-63'-linked ubiquitination of the CARD domains that promotes interaction with VCP/p97 and subsequent recruitment of RNF125. Within a negative feedback loop involving SIGLEC10 and PTPN11, 'Lys-48' ubiquitination at Lys-815 by CBL also elicits the proteasomal degradation of RIGI. Deubiquitinated by CYLD, a protease that selectively cleaves 'Lys-63'-linked ubiquitin chains. Also probably deubiquitinated by USP17L2/USP17 that cleaves 'Lys-48'- and 'Lys-63'-linked ubiquitin chains and positively regulates the receptor. Ubiquitinated by TRIM40 via 'Lys-48'-linked ubiquitination; leading to proteasomal degradation. Deubiquitinated by USP27X that cleaves 'Lys-63'-linked ubiquitin chains and inhibits the innate immune receptor activity. Deubiquitinated by USP3 that also cleaves 'Lys-63'-linked ubiquitin chains and inhibits the innate immune receptor activity. Degraded via selective autophagy following interaction with IRGM. IRGM promotes RIGI recruitment to autophagosome membranes, promoting its SQSTM1/p62-dependent autophagic degradation. In terms of tissue distribution, ubiquitously expressed, with highest levels in spleen, liver, intestine and heart. Up-regulated in tracheobronchial lymph node and tonsils during porcine reproductive and respiratory syndrome virus (PRRSV) infection.

Its subcellular location is the cytoplasm. It localises to the cell projection. It is found in the ruffle membrane. The protein resides in the cytoskeleton. The protein localises to the cell junction. Its subcellular location is the tight junction. It carries out the reaction ATP + H2O = ADP + phosphate + H(+). In terms of biological role, innate immune receptor that senses cytoplasmic viral nucleic acids and activates a downstream signaling cascade leading to the production of type I interferons and pro-inflammatory cytokines. Forms a ribonucleoprotein complex with viral RNAs on which it homooligomerizes to form filaments. The homooligomerization allows the recruitment of RNF135 an E3 ubiquitin-protein ligase that activates and amplifies the RIG-I-mediated antiviral signaling in an RNA length-dependent manner through ubiquitination-dependent and -independent mechanisms. Upon activation, associates with mitochondria antiviral signaling protein (MAVS/IPS1) that activates the IKK-related kinases TBK1 and IKBKE which in turn phosphorylate the interferon regulatory factors IRF3 and IRF7, activating transcription of antiviral immunological genes including the IFN-alpha and IFN-beta interferons. Ligands include: 5'-triphosphorylated ssRNA and dsRNA and short dsRNA (&lt;1 kb in length). In addition to the 5'-triphosphate moiety, blunt-end base pairing at the 5'-end of the RNA is very essential. Overhangs at the non-triphosphorylated end of the dsRNA RNA have no major impact on its activity. A 3'overhang at the 5'triphosphate end decreases and any 5'overhang at the 5' triphosphate end abolishes its activity. Detects both positive and negative strand RNA viruses including members of the families Paramyxoviridae, Rhabdoviridae: vesicular stomatitis virus (VSV) Orthomyxoviridae: influenza A and B virus, Flaviviridae: Japanese encephalitis virus (JEV). It also detects rotavirus and reovirus. Also involved in antiviral signaling in response to viruses containing a dsDNA genome. Detects dsRNA produced from non-self dsDNA by RNA polymerase III. May play important roles in granulocyte production and differentiation, bacterial phagocytosis and in the regulation of cell migration. The protein is Antiviral innate immune response receptor RIG-I of Sus scrofa (Pig).